Here is a 465-residue protein sequence, read N- to C-terminus: uncharacterized protein (465 aa).

Residues 13–71 (GPRPGLRLELQAIDLDRDGHGLARWQGWVVVVPGLLPGERAKVQLQQRQKSRWLSRISE) enclose the TRAM domain. 4 residues coordinate [4Fe-4S] cluster: Cys-84, Cys-90, Cys-93, and Cys-171. The S-adenosyl-L-methionine site is built by Gln-294, Tyr-324, Glu-345, and Asp-391. Residue Cys-418 is the Nucleophile of the active site.

The protein belongs to the class I-like SAM-binding methyltransferase superfamily. RNA M5U methyltransferase family.

This is an uncharacterized protein from Parasynechococcus marenigrum (strain WH8102).